Reading from the N-terminus, the 131-residue chain is Small ribosomal subunit protein uS8 (131 aa).

It belongs to the universal ribosomal protein uS8 family. In terms of assembly, part of the 30S ribosomal subunit. Contacts proteins S5 and S12.

Its function is as follows. One of the primary rRNA binding proteins, it binds directly to 16S rRNA central domain where it helps coordinate assembly of the platform of the 30S subunit. The chain is Small ribosomal subunit protein uS8 from Thiobacillus denitrificans (strain ATCC 25259 / T1).